Reading from the N-terminus, the 541-residue chain is T-complex protein 1 subunit epsilon (541 aa).

A2 carries the N-acetylalanine modification. A Glycyl lysine isopeptide (Lys-Gly) (interchain with G-Cter in SUMO2) cross-link involves residue K20. A Phosphoserine modification is found at S26. G53 is a binding site for ADP. G53 contacts ATP. Mg(2+) is bound at residue D104. Residues G105, T106, T107, and S175 each contribute to the ADP site. ATP-binding residues include T106 and T107. Residues K210, K214, K265, K275, and K279 each participate in a glycyl lysine isopeptide (Lys-Gly) (interchain with G-Cter in SUMO2) cross-link. The residue at position 346 (S346) is a Phosphoserine. K392 is covalently cross-linked (Glycyl lysine isopeptide (Lys-Gly) (interchain with G-Cter in SUMO2)). G422, D492, E508, and K513 together coordinate ADP. ATP is bound at residue G422. S539 bears the Phosphoserine mark.

The protein belongs to the TCP-1 chaperonin family. Component of the chaperonin-containing T-complex (TRiC), a hexadecamer composed of two identical back-to-back stacked rings enclosing a protein folding chamber. Each ring is made up of eight different subunits: TCP1/CCT1, CCT2, CCT3, CCT4, CCT5, CCT6A/CCT6, CCT7, CCT8. Interacts with PACRG. Interacts with DNAAF4. Interacts with DLEC1. Interacts with SPMAP2. In terms of processing, ubiquitinated by the DCX(DCAF12) complex specifically recognizes the diglutamate (Glu-Glu) at the C-terminus, leading to its degradation.

It is found in the cytoplasm. The protein localises to the cytoskeleton. The protein resides in the microtubule organizing center. Its subcellular location is the centrosome. The catalysed reaction is ATP + H2O = ADP + phosphate + H(+). Functionally, component of the chaperonin-containing T-complex (TRiC), a molecular chaperone complex that assists the folding of actin, tubulin and other proteins upon ATP hydrolysis. The TRiC complex mediates the folding of WRAP53/TCAB1, thereby regulating telomere maintenance. As part of the TRiC complex may play a role in the assembly of BBSome, a complex involved in ciliogenesis regulating transports vesicles to the cilia. This is T-complex protein 1 subunit epsilon (Cct5) from Rattus norvegicus (Rat).